Here is a 69-residue protein sequence, read N- to C-terminus: Putative F-box protein At2g33705 (69 aa).

In terms of domain architecture, F-box spans 14–59; it reads GVNLEQIPYDLVLEILLKLSAKSIARFRCVSKLWDSTFRSRYFTEL.

The polypeptide is Putative F-box protein At2g33705 (Arabidopsis thaliana (Mouse-ear cress)).